Here is a 178-residue protein sequence, read N- to C-terminus: Large ribosomal subunit protein uL6 (178 aa).

The protein belongs to the universal ribosomal protein uL6 family. Part of the 50S ribosomal subunit.

This protein binds to the 23S rRNA, and is important in its secondary structure. It is located near the subunit interface in the base of the L7/L12 stalk, and near the tRNA binding site of the peptidyltransferase center. The chain is Large ribosomal subunit protein uL6 from Sulfurovum sp. (strain NBC37-1).